The chain runs to 417 residues: MQFHAVYQNNDTKANLDFALNISTINFATLQELQNSFDLQGSDLTAGLFYKYSVNKLTSGTNDLTTIAKTALGENIIQKQVSLTQSIIKPRLEAAKTQYKQDIIAPFAKERQAALAQHLKEIEEAKQRAEQLLKEQQEAEKRRQEEVKNVAETQQFNDSLTSAQKFKEYWLKQGKDVTKKVELIQALKSSFFRNQNRTFNFLIAGFRTAIDWYYNQEKNNTTAKNNAFGKNGIQFPVAGFQGIYMSQWLRDELSGKTDIKLNLKSLSVQNENKNSSINWNKQKRIEIKQVKPFNYSFEINLKYTGSYNVSLWYLIGAAIGGIPTSWSGTMDMKFIVDGDLDSGIVTKQDYPGSKFEFTEDKLWFTLHVKQQIKVKEQGFMNLLKGQSLDNLDLRTGTTKPPVVDLASYLHFVILTAK.

Belongs to the MG032/MG096/MG288 family.

This is an uncharacterized protein from Mycoplasma pneumoniae (strain ATCC 29342 / M129 / Subtype 1) (Mycoplasmoides pneumoniae).